Reading from the N-terminus, the 539-residue chain is MAAKDVKFGNDARVKMLRGVNVLADAVKVTLGPKGRNVVLDKSFGAPTITKDGVSVAREIELEDKFENMGAQMVKEVASKANDAAGDGTTTATVLAQSIIAEGLKAVAAGMNPMDLKRGIDKAVVAAVEELKALSVPCSDSKAIAQVGTISANSDETVGKLIAEAMDKVGKEGVITVEDGTGLEDELDVVEGMQFDRGYLSPYFINKPETGAVELESPFILLADKKISNIREMLPVLEAVAKAGKPLLIIAEDVEGEALATLVVNTMRGIVKVAAVKAPGFGDRRKAMLQDIATLTGGTVISEEIGMELEKATLEDMGQAKRVVINKDTTTIIDGVGEEAAIQGRVAQIRKQIEEATSDYDREKLQERVAKLAGGVAVIKVGAATEVEMKEKKARVDDALHATRAAVEEGVVAGGGVALIRVASKLSNLRGQNEDQNVGIKVALRAMEAPLRQIVLNCGEEPSVVANTVKAGDGNYGYNAATEEYGNMIDMGILDPTKVTRSALQYAASVAGLMITTECMVTDLPKGDAPDLRAAGMGG.

Residues 30 to 33 (TLGP), lysine 51, 87 to 91 (DGTTT), glycine 415, 479 to 481 (NAA), and aspartate 495 each bind ATP.

It belongs to the chaperonin (HSP60) family. As to quaternary structure, forms a cylinder of 14 subunits composed of two heptameric rings stacked back-to-back. Interacts with the co-chaperonin GroES.

Its subcellular location is the cytoplasm. It carries out the reaction ATP + H2O + a folded polypeptide = ADP + phosphate + an unfolded polypeptide.. Together with its co-chaperonin GroES, plays an essential role in assisting protein folding. The GroEL-GroES system forms a nano-cage that allows encapsulation of the non-native substrate proteins and provides a physical environment optimized to promote and accelerate protein folding. The protein is Chaperonin GroEL of Kluyvera intermedia (Enterobacter intermedius).